Reading from the N-terminus, the 279-residue chain is 3-methyl-2-oxobutanoate hydroxymethyltransferase (279 aa).

Residues Asp-43 and Asp-82 each contribute to the Mg(2+) site. Residues 43–44, Asp-82, and Lys-112 each bind 3-methyl-2-oxobutanoate; that span reads DS. Glu-114 contacts Mg(2+). Residue Glu-181 is the Proton acceptor of the active site.

It belongs to the PanB family. Homodecamer; pentamer of dimers. Mg(2+) serves as cofactor.

Its subcellular location is the cytoplasm. The catalysed reaction is 3-methyl-2-oxobutanoate + (6R)-5,10-methylene-5,6,7,8-tetrahydrofolate + H2O = 2-dehydropantoate + (6S)-5,6,7,8-tetrahydrofolate. The protein operates within cofactor biosynthesis; (R)-pantothenate biosynthesis; (R)-pantoate from 3-methyl-2-oxobutanoate: step 1/2. Functionally, catalyzes the reversible reaction in which hydroxymethyl group from 5,10-methylenetetrahydrofolate is transferred onto alpha-ketoisovalerate to form ketopantoate. This chain is 3-methyl-2-oxobutanoate hydroxymethyltransferase, found in Bacillus pumilus (strain SAFR-032).